The primary structure comprises 59 residues: Crassipeptide cce9a (59 aa).

The propeptide occupies 1–30 (ADNHARVAGPRAVASGRYATEKAFLQMMTR).

Post-translationally, contains 3 disulfide bonds. As to expression, expressed by the venom duct.

It is found in the secreted. Its function is as follows. Crassispirid snail peptide that induces sleep-like symptoms in young mice (12 and 14 days) and hyperactivity in older mice (16 days), when intracranially injected. The protein is Crassipeptide cce9a of Crassispira cerithina (Sea snail).